Reading from the N-terminus, the 381-residue chain is E3 ubiquitin-protein ligase KCMF1 (381 aa).

The residue at position 2 (Ser-2) is an N-acetylserine. Residue Ser-2 is modified to Phosphoserine. The segment at 4 to 60 (HEGVSCDACLKGNFRGRRYKCLICYDYDLCASCYESGATTTRHTTDHPMQCILTRVD) adopts a ZZ-type zinc-finger fold. Zn(2+) contacts are provided by Cys-9, Cys-12, Cys-24, Cys-27, Cys-33, Cys-36, His-46, and His-50. The segment at 78 to 101 (FTCPYCGKMGYTETSLQEHVTSEH) adopts a C2H2-type zinc-finger fold. Residues 154-194 (MFHPGRGLGGPRARRSNMHFTSSSTGGLSSSQSSYSPSSRE) are disordered. Phosphoserine is present on residues Ser-169, Ser-189, and Ser-212. Residues 175 to 192 (SSSTGGLSSSQSSYSPSS) are compositionally biased toward low complexity. Residues 224-259 (ASQLQQLQMQLQLERQHAQAARQQLETARNASRRTN) are a coiled coil. A phosphoserine mark is found at Ser-335 and Ser-336.

Belongs to the KCMF1 family. In terms of assembly, component of the SIFI complex, composed of KCMF1, UBR4 and calmodulin (CALM1, CALM2 or CALM3). As to expression, testis, liver, kidney, heart and skeletal muscle.

The protein resides in the cytoplasm. The protein localises to the late endosome. Its subcellular location is the lysosome. The catalysed reaction is S-ubiquitinyl-[E2 ubiquitin-conjugating enzyme]-L-cysteine + [acceptor protein]-L-lysine = [E2 ubiquitin-conjugating enzyme]-L-cysteine + N(6)-ubiquitinyl-[acceptor protein]-L-lysine.. The protein operates within protein modification; protein ubiquitination. Its function is as follows. E3 ubiquitin-protein ligase which accepts ubiquitin from an E2 ubiquitin-conjugating enzyme and then transfers it to targeted substrates, promoting their degradation by the proteasome. Together with UBR4, component of the N-end rule pathway: ubiquitinates proteins bearing specific N-terminal residues that are destabilizing according to the N-end rule, leading to their degradation. Does not ubiquitinate proteins that are acetylated at the N-terminus. Together with UBR4, part of a protein quality control pathway that catalyzes ubiquitination and degradation of proteins that have been oxidized in response to reactive oxygen species (ROS): recognizes proteins with an Arg-CysO3(H) degron at the N-terminus, and mediates assembly of heterotypic 'Lys-63'-/'Lys-27'-linked branched ubiquitin chains on oxidized proteins, leading to their degradation by autophagy. Catalytic component of the SIFI complex, a multiprotein complex required to inhibit the mitochondrial stress response after a specific stress event has been resolved: ubiquitinates and degrades (1) components of the HRI-mediated signaling of the integrated stress response, such as DELE1 and EIF2AK1/HRI, as well as (2) unimported mitochondrial precursors. Within the SIFI complex, UBR4 initiates ubiquitin chain that are further elongated or branched by KCMF1. This is E3 ubiquitin-protein ligase KCMF1 from Mus musculus (Mouse).